The chain runs to 2517 residues: MVGERHAGDLMVPLGPRLQAYPEELIRQRPGHDGHPEYLIRWSVLKCGEVGKVGVEEGKAEHILMWLSAPEVYANCPGLLGERALSKGLQHEPAGVSGSFPRDPGGLDEVAMGEMEADVQALVRRAARQLAESGTPSLTAAVLHTIHVLSAYASIGPLTGVFRETGALDLLMHMLCNPEPQIRRSAGKMLQALAAHDAGSRAHVLLSLSQQDGIEQHMDFDSRYTLLELFAETTSSEEHCMAFEGIHLPQIPGKLLFSLVKRYLCVTSLLDQLNSSPELGAGDQSSPCATREKSRGQRELEFSMAVGNLISELVRSMGWARNLSEQGMSPPRPTRSIFQPYISGPSLLLPTIVTTPRRQGWVFRQRSEFSSRSGYGEYVQQTLQPGMRVRMLDDYEEISAGDEGEFRQSNNGIPPVQVFWQSTGRTYWVHWHMLEILGPEEATEDKASAAVEKGAGATVLGTAFPSWDWNPMDGLYPLPYLQPEPQKNERVGYLTQAEWWELLFFIKKLDLCEQQPIFQNLWKNLDETLGEKALGEISVSVEMAESLLQVLSSRFEGSTLNDLLNSQIYTKYGLLSNEPSSSSTSRNHSCTPDPEEESKSEASFSEEETESLKAKAEAPKTEAEPTKTRTETPMAQSDSQLFNQLLVTEGMTLPTEMKEAASEMARALRGPGPRSSLDQHVAAVVATVQISSLDTNLQLSGLSALSQAVEEVTERDHPLVRPDRSLREKLVKMLVELLTNQVGEKMVVVQALRLLYLLMTKHEWRPLFAREGGIYAVLVCMQEYKTSVLVQQAGLAALKMLAVASSSEIPTFVTGRDSIHSLFDAQMTREIFASIDSATRPGSESLLLTVPAAVILMLNTEGCSSAARNGLLLLNLLLCNHHTLGDQIITQELRDTLFRHSGIAPRTEPMPTTRTILMMLLNRYSEPPGSPERAALETPIIQGQDGSPELLIRSLVGGPSAELLLDLERVLCREGSPGGAVRPLLKRLQQETQPFLLLLRTLDAPGPNKTLLLSVLRVITRLLDFPEAMVLPWHEVLEPCLNCLSGPSSDSEIVQELTCFLHRLASMHKDYAVVLCCLGAKEILSKVLDKHSAQLLLGCELRDLVTECEKYAQLYSNLTSSILAGCIQMVLGQIEDHRRTHQPINIPFFDVFLRHLCQGSSVEVKEDKCWEKVEVSSNPHRASKLTDHNPKTYWESNGSTGSHYITLHMHRGVLVRQLTLLVASEDSSYMPARVVVFGGDSTSCIGTELNTVNVMPSASRVILLENLNRFWPIIQIRIKRCQQGGIDTRVRGVEVLGPKPTFWPLFREQLCRRTCLFYTIRAQAWSRDIAEDHRRLLQLCPRLNRVLRHEQNFADRFLPDDEAAQALGKTCWEALVSPLVQNITSPDAEGVSALGWLLDQYLEQRETSRNPLSRAASFASRVRRLCHLLVHVEPPPGPSPEPSTRPFSKNSKGRDRSPAPSPVLPSSSLRNITQCWLSVVQEQVSRFLAAAWRAPDFVPRYCKLYEHLQRAGSELFGPRAAFMLALRSGFSGALLQQSFLTAAHMSEQFARYIDQQIQGGLIGGAPGVEMLGQLQRHLEPIMVLSGLELATTFEHFYQHYMADRLLSFGSSWLEGAVLEQIGLCFPNRLPQLMLQSLSTSEELQRQFHLFQLQRLDKLFLEQEDEEEKRLEEEEEEEEEEEAEKELFIEDPSPAISILVLSPRCWPVSPLCYLYHPRKCLPTEFCDALDRFSSFYSQSQNHPVLDMGPHRRLQWTWLGRAELQFGKQILHVSTVQMWLLLKFNQTEEVSVETLLKDSDLSPELLLQALVPLTSGNGPLTLHEGQDFPHGGVLRLHEPGPQRSGEALWLIPPQAYLNVEKDEGRTLEQKRNLLSCLLVRILKAHGEKGLHIDQLVCLVLEAWQKGPNPPGTLGHTVAGGVACTSTDVLSCILHLLGQGYVKRRDDRPQILMYAAPEPMGPCRGQADVPFCGSQSETSKPSPEAVATLASLQLPAGRTMSPQEVEGLMKQTVRQVQETLNLEPDVAQHLLAHSHWGAEQLLQSYSEDPEPLLLAAGLCVHQAQAVPVRPDHCPVCVSPLGCDDDLPSLCCMHYCCKSCWNEYLTTRIEQNLVLNCTCPIADCPAQPTGAFIRAIVSSPEVISKYEKALLRGYVESCSNLTWCTNPQGCDRILCRQGLGCGTTCSKCGWASCFNCSFPEAHYPASCGHMSQWVDDGGYYDGMSVEAQSKHLAKLISKRCPSCQAPIEKNEGCLHMTCAKCNHGFCWRCLKSWKPNHKDYYNCSAMVSKAARQEKRFQDYNERCTFHHQAREFAVNLRNRVSAIHEVPPPRSFTFLNDACQGLEQARKVLAYACVYSFYSQDAEYMDVVEQQTENLELHTNALQILLEETLLRCRDLASSLRLLRADCLSTGMELLRRIQERLLAILQHSAQDFRVGLQSPSVEAWEAKGPNMPGSQPQASSGPEAEEEEEDDEDDVPEWQQDEFDEELDNDSFSYDESENLDQETFFFGDEEEDEDEAYD.

A Glycyl lysine isopeptide (Lys-Gly) (interchain with G-Cter in ubiquitin) cross-link involves residue lysine 87. The span at 276–288 shows a compositional bias: polar residues; the sequence is SPELGAGDQSSPC. Residues 276 to 296 are disordered; the sequence is SPELGAGDQSSPCATREKSRG. The CPH domain maps to 366-439; that stretch reads RSEFSSRSGY…HWHMLEILGP (74 aa). Low complexity predominate over residues 576–589; the sequence is SNEPSSSSTSRNHS. The interval 576–639 is disordered; sequence SNEPSSSSTS…TETPMAQSDS (64 aa). Positions 593–609 are enriched in acidic residues; sequence DPEEESKSEASFSEEET. Basic and acidic residues predominate over residues 610-630; that stretch reads ESLKAKAEAPKTEAEPTKTRT. The residue at position 976 (serine 976) is a Phosphoserine. In terms of domain architecture, DOC spans 1143–1322; sequence PINIPFFDVF…RTCLFYTIRA (180 aa). 1363-1370 lines the ATP pocket; that stretch reads AAQALGKT. Disordered regions lie at residues 1432-1466 and 1664-1685; these read VEPP…VLPS and DEEE…AEKE. A compositionally biased stretch (pro residues) spans 1433 to 1443; sequence EPPPGPSPEPS. Serine 1457 carries the post-translational modification Phosphoserine. Residues 1649–1691 are a coiled coil; that stretch reads LFQLQRLDKLFLEQEDEEEKRLEEEEEEEEEEEAEKELFIEDP. Positions 1664–1683 are enriched in acidic residues; the sequence is DEEEKRLEEEEEEEEEEEAE. Residue lysine 1881 forms a Glycyl lysine isopeptide (Lys-Gly) (interchain with G-Cter in NEDD8) linkage. Residues 2066–2283 form a TRIAD supradomain region; it reads RPDHCPVCVS…KDYYNCSAMV (218 aa). Zn(2+)-binding residues include cysteine 2070, cysteine 2073, cysteine 2088, histidine 2090, cysteine 2093, cysteine 2096, cysteine 2115, cysteine 2120, cysteine 2160, cysteine 2166, cysteine 2181, cysteine 2184, cysteine 2189, cysteine 2192, histidine 2198, cysteine 2203, cysteine 2236, and cysteine 2239. The RING-type 1 zinc-finger motif lies at 2070–2120; the sequence is CPVCVSPLGCDDDLPSLCCMHYCCKSCWNEYLTTRIEQNLVLNCTCPIADC. The segment at 2140–2203 adopts an IBR-type zinc-finger fold; that stretch reads SKYEKALLRG…FPEAHYPASC (64 aa). An RING-type 2; atypical zinc finger spans residues 2236–2265; that stretch reads CPSCQAPIEKNEGCLHMTCAKCNHGFCWRC. Cysteine 2249 is an active-site residue. Zn(2+) is bound by residues cysteine 2254, cysteine 2257, cysteine 2262, cysteine 2265, histidine 2273, and cysteine 2279. Residues 2365–2385 adopt a coiled-coil conformation; it reads VEQQTENLELHTNALQILLEE. Serine 2436 is modified (phosphoserine). Positions 2442 to 2517 are disordered; the sequence is WEAKGPNMPG…EEEDEDEAYD (76 aa). 2 stretches are compositionally biased toward acidic residues: residues 2461-2499 and 2506-2517; these read EAEE…ENLD and GDEEEDEDEAYD.

It belongs to the cullin family. In terms of assembly, component of the Cul9-RING complex consisting of CUL9 and RBX1; the CUL9-RBX1 complex is a heterododecamer composed of six CUL9 and six RBX1 protomers. Interacts (via C-terminal TRIAD/RBR supradomain) with E2 ubiquitin-conjugating enzyme UBE2L3. Interacts with CUL7; the interaction with the CUL7 component of the 3M complex leads to inhibition of CUL9 activity. The CUL7-CUL9 heterodimer seems to interact specifically with TP53, likely via the CPH domain. Forms a complex with p53/TP53 in the cytoplasm of unstressed cells. Interacts with UBCH7 and UBCH8. Post-translationally, autoubiquitinated by the CUL9-RBX1 complex at Lys-87. In terms of processing, neddylated. Neddylation is mediated by E1 enzyme UBA3-NAE1 complex and E2 enzyme UBE2F. Structural rearrangment of the C-terminal TRIAD/RBR supradomain may play a role in neddylation and deneddylation. Ubiquitously expressed in all tissues with highest expression in testis brain and kidney.

The protein localises to the cytoplasm. Core component of a Cul9-RING ubiquitin-protein ligase complex composed of CUL9 and RBX1. The CUL9-RBX1 complex mediates ubiquitination and subsequent degradation of BIRC5 and is required to maintain microtubule dynamics and genome integrity. Acts downstream of the 3M complex, which inhibits the ubiquitination of BIRC5. The CUL9-RBX1 complex also mediates mono-ubiquitination of p53/TP53. Acts as a cytoplasmic anchor protein in p53/TP53-associated protein complex. Regulates the subcellular localization of p53/TP53 and its subsequent function. Ubiquitinates apurinic/apyrimidinic endodeoxyribonuclease APEX2. Ubiquitination by the CUL9-RBX1 complex is predominantly mediated by E2 ubiquitin-conjugating enzymes UBE2L3 and UBE2D2. The polypeptide is Cullin-9 (CUL9) (Homo sapiens (Human)).